A 274-amino-acid chain; its full sequence is Putative phosphoenolpyruvate synthase regulatory protein (274 aa).

Gly154 to Thr161 contributes to the ADP binding site.

The protein belongs to the pyruvate, phosphate/water dikinase regulatory protein family. PSRP subfamily.

The enzyme catalyses [pyruvate, water dikinase] + ADP = [pyruvate, water dikinase]-phosphate + AMP + H(+). The catalysed reaction is [pyruvate, water dikinase]-phosphate + phosphate + H(+) = [pyruvate, water dikinase] + diphosphate. Its function is as follows. Bifunctional serine/threonine kinase and phosphorylase involved in the regulation of the phosphoenolpyruvate synthase (PEPS) by catalyzing its phosphorylation/dephosphorylation. The polypeptide is Putative phosphoenolpyruvate synthase regulatory protein (Pseudomonas aeruginosa (strain LESB58)).